We begin with the raw amino-acid sequence, 122 residues long: Large ribosomal subunit protein bL12 (122 aa).

Belongs to the bacterial ribosomal protein bL12 family. In terms of assembly, homodimer. Part of the ribosomal stalk of the 50S ribosomal subunit. Forms a multimeric L10(L12)X complex, where L10 forms an elongated spine to which 2 to 4 L12 dimers bind in a sequential fashion. Binds GTP-bound translation factors.

Functionally, forms part of the ribosomal stalk which helps the ribosome interact with GTP-bound translation factors. Is thus essential for accurate translation. In Streptococcus sanguinis (strain SK36), this protein is Large ribosomal subunit protein bL12.